The chain runs to 292 residues: Pantothenate synthetase (292 aa).

30 to 37 (MGALHEGH) serves as a coordination point for ATP. His37 functions as the Proton donor in the catalytic mechanism. Gln61 serves as a coordination point for (R)-pantoate. Residue Gln61 participates in beta-alanine binding. Position 147–150 (147–150 (GEKD)) interacts with ATP. Position 153 (Gln153) interacts with (R)-pantoate. 184-187 (VSSR) contributes to the ATP binding site.

It belongs to the pantothenate synthetase family. Homodimer.

The protein resides in the cytoplasm. It catalyses the reaction (R)-pantoate + beta-alanine + ATP = (R)-pantothenate + AMP + diphosphate + H(+). The protein operates within cofactor biosynthesis; (R)-pantothenate biosynthesis; (R)-pantothenate from (R)-pantoate and beta-alanine: step 1/1. Functionally, catalyzes the condensation of pantoate with beta-alanine in an ATP-dependent reaction via a pantoyl-adenylate intermediate. The protein is Pantothenate synthetase of Chlorobium phaeovibrioides (strain DSM 265 / 1930) (Prosthecochloris vibrioformis (strain DSM 265)).